The sequence spans 498 residues: Galactose-1-phosphate uridylyltransferase (498 aa).

This sequence belongs to the galactose-1-phosphate uridylyltransferase type 2 family.

The protein localises to the cytoplasm. The enzyme catalyses alpha-D-galactose 1-phosphate + UDP-alpha-D-glucose = alpha-D-glucose 1-phosphate + UDP-alpha-D-galactose. Its pathway is carbohydrate metabolism; galactose metabolism. This Clostridium perfringens (strain 13 / Type A) protein is Galactose-1-phosphate uridylyltransferase.